The following is a 100-amino-acid chain: MAKKSLIQREKKRQKLEQKYHLIRRSSKKEISKIPSLSGKWEIHGKLQSLPRNSAATRLHRRCFSTGRPRANYRDFGLSGHILREMVHACLLPGATRSSW.

The protein belongs to the universal ribosomal protein uS14 family. As to quaternary structure, part of the 30S ribosomal subunit.

The protein localises to the plastid. It is found in the chloroplast. Its function is as follows. Binds 16S rRNA, required for the assembly of 30S particles. The chain is Small ribosomal subunit protein uS14c from Platanus occidentalis (Sycamore).